A 182-amino-acid chain; its full sequence is Adenine phosphoribosyltransferase (182 aa).

Belongs to the purine/pyrimidine phosphoribosyltransferase family. In terms of assembly, homodimer.

It is found in the cytoplasm. The catalysed reaction is AMP + diphosphate = 5-phospho-alpha-D-ribose 1-diphosphate + adenine. It functions in the pathway purine metabolism; AMP biosynthesis via salvage pathway; AMP from adenine: step 1/1. Functionally, catalyzes a salvage reaction resulting in the formation of AMP, that is energically less costly than de novo synthesis. This is Adenine phosphoribosyltransferase from Campylobacter jejuni subsp. jejuni serotype O:23/36 (strain 81-176).